The chain runs to 383 residues: ATP phosphoribosyltransferase regulatory subunit (383 aa).

It belongs to the class-II aminoacyl-tRNA synthetase family. HisZ subfamily. As to quaternary structure, heteromultimer composed of HisG and HisZ subunits.

It localises to the cytoplasm. It functions in the pathway amino-acid biosynthesis; L-histidine biosynthesis; L-histidine from 5-phospho-alpha-D-ribose 1-diphosphate: step 1/9. Required for the first step of histidine biosynthesis. May allow the feedback regulation of ATP phosphoribosyltransferase activity by histidine. This Neisseria meningitidis serogroup C / serotype 2a (strain ATCC 700532 / DSM 15464 / FAM18) protein is ATP phosphoribosyltransferase regulatory subunit.